The following is a 445-amino-acid chain: Tubulin alpha-1 chain (445 aa).

GTP is bound at residue Gln11. Lys40 is subject to N6-acetyllysine. Glu71, Ser140, Gly144, Thr145, Thr179, Asn206, and Asn228 together coordinate GTP. A Mg(2+)-binding site is contributed by Glu71. Glu254 is an active-site residue.

This sequence belongs to the tubulin family. As to quaternary structure, dimer of alpha and beta chains. A typical microtubule is a hollow water-filled tube with an outer diameter of 25 nm and an inner diameter of 15 nM. Alpha-beta heterodimers associate head-to-tail to form protofilaments running lengthwise along the microtubule wall with the beta-tubulin subunit facing the microtubule plus end conferring a structural polarity. Microtubules usually have 13 protofilaments but different protofilament numbers can be found in some organisms and specialized cells. Requires Mg(2+) as cofactor. Post-translationally, acetylation of alpha chains at Lys-40 stabilizes microtubules and affects affinity and processivity of microtubule motors. This modification has a role in multiple cellular functions, ranging from cell motility, cell cycle progression or cell differentiation to intracellular trafficking and signaling.

Its subcellular location is the cytoplasm. The protein resides in the cytoskeleton. The enzyme catalyses GTP + H2O = GDP + phosphate + H(+). Its function is as follows. Tubulin is the major constituent of microtubules, a cylinder consisting of laterally associated linear protofilaments composed of alpha- and beta-tubulin heterodimers. Microtubules grow by the addition of GTP-tubulin dimers to the microtubule end, where a stabilizing cap forms. Below the cap, tubulin dimers are in GDP-bound state, owing to GTPase activity of alpha-tubulin. The polypeptide is Tubulin alpha-1 chain (Stylonychia lemnae (Ciliate)).